The chain runs to 360 residues: Phospho-N-acetylmuramoyl-pentapeptide-transferase (360 aa).

The next 10 membrane-spanning stretches (helical) occupy residues 26–46 (AIVSLLTALFISLWMGPRMIA), 72–92 (PTMGGIMILTAIVVSVLLWAY), 94–114 (SNPYVWCVLTVLIGYGIIGFV), 132–152 (WKYFWMSVIALGVAFALYLAG), 168–188 (VMPQLGLFYILLAYFVIVGTG), 199–219 (GLAIMPTVFVAGGFALVAWAT), 236–256 (AGELVIVCTAIVGAGLGFLWF), 263–283 (VFMGDVGSLALGGALGIIAVL), 288–308 (FLLVIMGGVFVVETLSVILQV), and 338–358 (VIVRFWIISLMLVLIGLATLK).

This sequence belongs to the glycosyltransferase 4 family. MraY subfamily. It depends on Mg(2+) as a cofactor.

It is found in the cell inner membrane. The enzyme catalyses UDP-N-acetyl-alpha-D-muramoyl-L-alanyl-gamma-D-glutamyl-meso-2,6-diaminopimeloyl-D-alanyl-D-alanine + di-trans,octa-cis-undecaprenyl phosphate = di-trans,octa-cis-undecaprenyl diphospho-N-acetyl-alpha-D-muramoyl-L-alanyl-D-glutamyl-meso-2,6-diaminopimeloyl-D-alanyl-D-alanine + UMP. It functions in the pathway cell wall biogenesis; peptidoglycan biosynthesis. Its function is as follows. Catalyzes the initial step of the lipid cycle reactions in the biosynthesis of the cell wall peptidoglycan: transfers peptidoglycan precursor phospho-MurNAc-pentapeptide from UDP-MurNAc-pentapeptide onto the lipid carrier undecaprenyl phosphate, yielding undecaprenyl-pyrophosphoryl-MurNAc-pentapeptide, known as lipid I. The chain is Phospho-N-acetylmuramoyl-pentapeptide-transferase from Enterobacter sp. (strain 638).